The following is a 968-amino-acid chain: RNA polymerase-associated protein RapA (968 aa).

Residues 163 to 332 (EVGSRYAPRV…FARLRLLDPD (170 aa)) enclose the Helicase ATP-binding domain. 176–183 (DEVGLGKT) contributes to the ATP binding site. Positions 278–281 (DEAH) match the DEAH box motif. Residues 491–655 (RVDWLIEFLK…EFADELINVL (165 aa)) form the Helicase C-terminal domain.

This sequence belongs to the SNF2/RAD54 helicase family. RapA subfamily. As to quaternary structure, interacts with the RNAP. Has a higher affinity for the core RNAP than for the holoenzyme. Its ATPase activity is stimulated by binding to RNAP.

In terms of biological role, transcription regulator that activates transcription by stimulating RNA polymerase (RNAP) recycling in case of stress conditions such as supercoiled DNA or high salt concentrations. Probably acts by releasing the RNAP, when it is trapped or immobilized on tightly supercoiled DNA. Does not activate transcription on linear DNA. Probably not involved in DNA repair. This is RNA polymerase-associated protein RapA from Shewanella frigidimarina (strain NCIMB 400).